We begin with the raw amino-acid sequence, 249 residues long: Probable transcriptional regulatory protein Tfu_2096 (249 aa).

It belongs to the TACO1 family.

It localises to the cytoplasm. In Thermobifida fusca (strain YX), this protein is Probable transcriptional regulatory protein Tfu_2096.